A 507-amino-acid chain; its full sequence is Chromosomal replication initiator protein DnaA (507 aa).

Positions 1 to 112 (MTDDPGSGFT…PATDEADDTT (112 aa)) are domain I, interacts with DnaA modulators. The interval 99-162 (RIAPPATDEA…ERPRNTDSAT (64 aa)) is disordered. Over residues 113–127 (VPPSENPATTSPDTT) the composition is skewed to polar residues. Positions 113–166 (VPPSENPATTSPDTTTDNDEIDDSAAARGDNQHSWPSYFTERPRNTDSATAGVT) are domain II. Residues 167 to 383 (SLNRRYTFDT…GALIRVTAFA (217 aa)) form a domain III, AAA+ region region. Residues Gly211, Gly213, Lys214, and Thr215 each coordinate ATP. Positions 384–507 (SLNKTPIDKA…TTRIRQRSKR (124 aa)) are domain IV, binds dsDNA.

It belongs to the DnaA family. As to quaternary structure, oligomerizes as a right-handed, spiral filament on DNA at oriC.

It localises to the cytoplasm. Plays an essential role in the initiation and regulation of chromosomal replication. ATP-DnaA binds to the origin of replication (oriC) to initiate formation of the DNA replication initiation complex once per cell cycle. Binds the DnaA box (a 9 base pair repeat at the origin) and separates the double-stranded (ds)DNA. Forms a right-handed helical filament on oriC DNA; dsDNA binds to the exterior of the filament while single-stranded (ss)DNA is stabiized in the filament's interior. The ATP-DnaA-oriC complex binds and stabilizes one strand of the AT-rich DNA unwinding element (DUE), permitting loading of DNA polymerase. After initiation quickly degrades to an ADP-DnaA complex that is not apt for DNA replication. Binds acidic phospholipids. The sequence is that of Chromosomal replication initiator protein DnaA from Mycobacterium bovis (strain ATCC BAA-935 / AF2122/97).